Here is an 82-residue protein sequence, read N- to C-terminus: Small ribosomal subunit protein bS16 (82 aa).

Belongs to the bacterial ribosomal protein bS16 family.

In Pectobacterium carotovorum subsp. carotovorum (strain PC1), this protein is Small ribosomal subunit protein bS16.